We begin with the raw amino-acid sequence, 451 residues long: MQSIEDIWQETLQIVKKNMSKPSYDTWMKSTTAHSLEGNTFIISAPNNFVRDWLEKSYTQFIANILQEITGRLFDVRFIDGEQEENFEYTVIKPNPALDEDGIEIGKHMLNPRYVFDTFVIGSGNRFAHAASLAVAEAPAKAYNPLFIYGGVGLGKTHLMHAVGHYVQQHKDNAKVMYLSSEKFTNEFISSIRDNKTEEFRTKYRNVDVLLIDDIQFLAGKEGTQEEFFHTFNTLYDEQKQIIISSDRPPKEIPTLEDRLRSRFEWGLITDITPPDLETRIAILRKKAKADGLDIPNEVMLYIANQIDSNIRELEGALIRVVAYSSLVNKDITAGLAAEALKDIIPSSKSQVITISGIQETVGEYFHVRLEDFKAKKRTKSIAFPRQIAMYLSRELTDASLPKIGDEFGGRDHTTVIHAHEKISQLLKTDQVLKNDLAEIEKNLRKSQNMF.

Residues 1-72 (MQSIEDIWQE…ANILQEITGR (72 aa)) form a domain I, interacts with DnaA modulators region. The segment at 72–108 (RLFDVRFIDGEQEENFEYTVIKPNPALDEDGIEIGKH) is domain II. The domain III, AAA+ region stretch occupies residues 109-325 (MLNPRYVFDT…GALIRVVAYS (217 aa)). ATP-binding residues include glycine 153, glycine 155, lysine 156, and threonine 157. The segment at 326-451 (SLVNKDITAG…KNLRKSQNMF (126 aa)) is domain IV, binds dsDNA.

Belongs to the DnaA family. Oligomerizes as a right-handed, spiral filament on DNA at oriC.

It is found in the cytoplasm. Functionally, plays an essential role in the initiation and regulation of chromosomal replication. ATP-DnaA binds to the origin of replication (oriC) to initiate formation of the DNA replication initiation complex once per cell cycle. Binds the DnaA box (a 9 base pair repeat at the origin) and separates the double-stranded (ds)DNA. Forms a right-handed helical filament on oriC DNA; dsDNA binds to the exterior of the filament while single-stranded (ss)DNA is stabiized in the filament's interior. The ATP-DnaA-oriC complex binds and stabilizes one strand of the AT-rich DNA unwinding element (DUE), permitting loading of DNA polymerase. After initiation quickly degrades to an ADP-DnaA complex that is not apt for DNA replication. Binds acidic phospholipids. The polypeptide is Chromosomal replication initiator protein DnaA (Listeria welshimeri serovar 6b (strain ATCC 35897 / DSM 20650 / CCUG 15529 / CIP 8149 / NCTC 11857 / SLCC 5334 / V8)).